Reading from the N-terminus, the 748-residue chain is Cytosolic phospholipase A2 (748 aa).

The phospholipid binding stretch occupies residues 1–178; that stretch reads MSFIDPYQHI…MKKLLGPKKS (178 aa). Phosphoserine is present on serine 2. Positions 6–122 constitute a C2 domain; the sequence is PYQHIIVEHQ…KVGEKKEVPF (117 aa). 7 residues coordinate Ca(2+): aspartate 40, threonine 41, aspartate 43, asparagine 65, aspartate 93, alanine 94, and asparagine 95. In terms of domain architecture, PLA2c spans 140-739; sequence SCPDLRFSMA…SNVEARKFFN (600 aa). Residue serine 228 is the Nucleophile of the active site. Threonine 268 carries the phosphothreonine modification. A disordered region spans residues 427-458; sequence KHIVSNDSSDSDDEAQGPKGTENEEAEKEYQS. A phosphoserine mark is found at serine 434, serine 435, and serine 437. Serine 505 is subject to Phosphoserine; by MAPK. The residue at position 515 (serine 515) is a Phosphoserine. A Glycyl lysine isopeptide (Lys-Gly) (interchain with G-Cter in SUMO2) cross-link involves residue lysine 540. The active-site Proton acceptor is the aspartate 548. Lysine 605 is covalently cross-linked (Glycyl lysine isopeptide (Lys-Gly) (interchain with G-Cter in SUMO2)). A phosphoserine mark is found at serine 726 and serine 728.

As to quaternary structure, interacts with KAT5. In terms of processing, phosphorylated at both Ser-505 and Ser-726 in response to mitogenic stimuli. As to expression, expressed in various organs including uterus, kidney, spleen, liver, heart, lung and brain (at protein level).

It localises to the cytoplasm. The protein localises to the golgi apparatus membrane. Its subcellular location is the nucleus envelope. It catalyses the reaction a 1,2-diacyl-sn-glycero-3-phosphocholine + H2O = a 1-acyl-sn-glycero-3-phosphocholine + a fatty acid + H(+). The catalysed reaction is a 1-O-alkyl-2-acyl-sn-glycero-3-phosphocholine + H2O = a 1-O-alkyl-sn-glycero-3-phosphocholine + a fatty acid + H(+). The enzyme catalyses a 1-acyl-sn-glycero-3-phosphocholine + H2O = sn-glycerol 3-phosphocholine + a fatty acid + H(+). It carries out the reaction 1-hexadecanoyl-2-(5Z,8Z,11Z,14Z-eicosatetraenoyl)-sn-glycero-3-phosphocholine + H2O = 1-hexadecanoyl-sn-glycero-3-phosphocholine + (5Z,8Z,11Z,14Z)-eicosatetraenoate + H(+). It catalyses the reaction 1,2-di-(5Z,8Z,11Z,14Z-eicosatetraenoyl)-sn-glycero-3-phosphocholine + H2O = 1-(5Z,8Z,11Z,14Z-eicosatetraenoyl)-sn-glycero-3-phosphocholine + (5Z,8Z,11Z,14Z)-eicosatetraenoate + H(+). The catalysed reaction is 1-octadecanoyl-2-(5Z,8Z,11Z,14Z-eicosatetraenoyl)-sn-glycero-3-phosphocholine + H2O = 1-octadecanoyl-sn-glycero-3-phosphocholine + (5Z,8Z,11Z,14Z)-eicosatetraenoate + H(+). The enzyme catalyses 1-hexadecanoyl-2-(9Z,12Z-octadecadienoyl)-sn-glycero-3-phosphocholine + H2O = (9Z,12Z)-octadecadienoate + 1-hexadecanoyl-sn-glycero-3-phosphocholine + H(+). It carries out the reaction 1-octadecanoyl-2-(9Z,12Z,15Z-octadecatrienoyl)-sn-glycero-3-phosphocholine + H2O = (9Z,12Z,15Z)-octadecatrienoate + 1-octadecanoyl-sn-glycero-3-phosphocholine + H(+). It catalyses the reaction 1-(5Z,8Z,11Z,14Z-eicosatetraenoyl)-2-hexadecanoyl-sn-glycero-3-phosphocholine + H2O = 1-(5Z,8Z,11Z,14Z-eicosatetraenoyl)-sn-glycero-3-phosphocholine + hexadecanoate + H(+). The catalysed reaction is 1-O-hexadecyl-2-(5Z,8Z,11Z,14Z)-eicosatetraenoyl-sn-glycero-3-phosphocholine + H2O = 1-O-hexadecyl-sn-glycero-3-phosphocholine + (5Z,8Z,11Z,14Z)-eicosatetraenoate + H(+). The enzyme catalyses 1,2-di-(9Z-octadecenoyl)-sn-glycero-3-phospho-(1'-sn-glycerol) + H2O = 1-(9Z-octadecenoyl)-sn-glycero-3-phospho-(1'-sn-glycerol) + (9Z)-octadecenoate + H(+). It carries out the reaction 1-octadecanoyl-2-(5Z,8Z,11Z,14Z-eicosatetraenoyl)-sn-glycero-3-phosphate + H2O = 1-octadecanoyl-sn-glycero-3-phosphate + (5Z,8Z,11Z,14Z)-eicosatetraenoate + H(+). It catalyses the reaction 1-hexadecanoyl-sn-glycero-3-phosphocholine + H2O = sn-glycerol 3-phosphocholine + hexadecanoate + H(+). The catalysed reaction is 2-(prostaglandin E2)-sn-glycero-3-phosphoethanolamine + H2O = sn-glycero-3-phosphoethanolamine + prostaglandin E2 + H(+). The enzyme catalyses 2-[(15S)-hydroxy-(5Z,8Z,11Z,13E)-eicosatetraenoyl]-sn-glycero-3-phosphocholine + H2O = (15S)-hydroxy-(5Z,8Z,11Z,13E)-eicosatetraenoate + sn-glycerol 3-phosphocholine + H(+). It carries out the reaction 2-[(15R)-hydroxy-(5Z,8Z,11Z,13E)-eicosatetraenoyl]-sn-glycero-3-phosphocholine + H2O = (15R)-hydroxy-(5Z,8Z,11Z,13E)-eicosatetraenoate + sn-glycerol 3-phosphocholine + H(+). It catalyses the reaction 2-(prostaglandin E2)-sn-glycero-3-phosphocholine + H2O = prostaglandin E2 + sn-glycerol 3-phosphocholine + H(+). The catalysed reaction is 2-[(11R)-hydroxy-(5Z,8Z,12E,14Z)-eicosatetraenoyl]-sn-glycero-3-phosphocholine + H2O = (11R)-hydroxy-(5Z,8Z,12E,14Z)-eicosatetraenoate + sn-glycerol 3-phosphocholine + H(+). The enzyme catalyses 1-(5Z,8Z,11Z,14Z-eicosatetraenoyl)-2-O-hexadecyl-sn-glycero-3-phosphocholine + H2O = 2-O-hexadecyl-sn-glycero-3-phosphocholine + (5Z,8Z,11Z,14Z)-eicosatetraenoate + H(+). It carries out the reaction 1-octadecanoyl-2-(5Z,8Z,11Z,14Z-eicosatetraenoyl)-sn-glycero-3-phosphocholine + glycerol = 1-(5Z,8Z,11Z,14Z-eicosatetraenoyl)-glycerol + 1-octadecanoyl-sn-glycero-3-phosphocholine. It catalyses the reaction 1-octadecanoyl-2-(9Z,12Z,15Z-octadecatrienoyl)-sn-glycero-3-phosphocholine + glycerol = 1-(9Z,12Z,15Z-octadecatrienoyl)-glycerol + 1-octadecanoyl-sn-glycero-3-phosphocholine. It participates in membrane lipid metabolism; glycerophospholipid metabolism. It functions in the pathway lipid metabolism; arachidonate metabolism. Its pathway is lipid metabolism; prostaglandin biosynthesis. The protein operates within lipid metabolism; leukotriene B4 biosynthesis. Its activity is regulated as follows. Activated by cytosolic calcium, which is necessary for binding to membrane lipids. Activated by phosphorylation in response to mitogenic stimuli. Stimulated by agonists such as ATP and thrombin. Functionally, has primarily calcium-dependent phospholipase and lysophospholipase activities, with a major role in membrane lipid remodeling and biosynthesis of lipid mediators of the inflammatory response. Plays an important role in embryo implantation and parturition through its ability to trigger prostanoid production. Preferentially hydrolyzes the ester bond of the fatty acyl group attached at sn-2 position of phospholipids (phospholipase A2 activity). Selectively hydrolyzes sn-2 arachidonoyl group from membrane phospholipids, providing the precursor for eicosanoid biosynthesis via the cyclooxygenase pathway. In an alternative pathway of eicosanoid biosynthesis, hydrolyzes sn-2 fatty acyl chain of eicosanoid lysophopholipids to release free bioactive eicosanoids. Hydrolyzes the ester bond of the fatty acyl group attached at sn-1 position of phospholipids (phospholipase A1 activity) only if an ether linkage rather than an ester linkage is present at the sn-2 position. This hydrolysis is not stereospecific. Has calcium-independent phospholipase A2 and lysophospholipase activities in the presence of phosphoinositides. Has O-acyltransferase activity. Catalyzes the transfer of fatty acyl chains from phospholipids to a primary hydroxyl group of glycerol (sn-1 or sn-3), potentially contributing to monoacylglycerol synthesis. The polypeptide is Cytosolic phospholipase A2 (Pla2g4a) (Mus musculus (Mouse)).